Here is a 78-residue protein sequence, read N- to C-terminus: High temperature lethal protein 1 (78 aa).

Ser2 carries the post-translational modification N-acetylserine.

As to quaternary structure, interacts directly with RSC8. Component of the two forms of the RSC complex composed of at least either RSC1 or RSC2, and ARP7, ARP9, LDB7, NPL6, RSC3, RSC30, RSC4, RSC58, RSC6, RSC8, RSC9, SFH1, STH1, HTL1 and probably RTT102. The complexes interact with histone and histone variant components of centromeric chromatin. Component of a fungal-specific module (HTL1-LDB7-NPL6-RSC3-RSC30) within the RSC complex.

It localises to the nucleus. Its function is as follows. Required for cell cycle progression through G2/M transition at temperatures higher than 33 degrees Celsius. Component of the chromatin structure-remodeling complex (RSC), which is involved in transcription regulation and nucleosome positioning. RSC is responsible for the transfer of a histone octamer from a nucleosome core particle to naked DNA. The reaction requires ATP and involves an activated RSC-nucleosome intermediate. Remodeling reaction also involves DNA translocation, DNA twist and conformational change. As a reconfigurer of centromeric and flanking nucleosomes, RSC complex is required both for proper kinetochore function in chromosome segregation and, via a PKC1-dependent signaling pathway, for organization of the cellular cytoskeleton. When associated with the RSC complex, may act coordinately with PKC1 to regulate G2/M transition. Together with LDB7, NPL6, RSC3, RSC30 components, defines a fungal-specific module within the RSC complex that plays a role in many cellular functions including the maintenance of cell wall integrity. The protein is High temperature lethal protein 1 (HTL1) of Saccharomyces cerevisiae (strain ATCC 204508 / S288c) (Baker's yeast).